The primary structure comprises 562 residues: Abrin-c (562 aa).

The signal sequence occupies residues 1–34 (MDKTLKLLILCLAWTCSFSALRCAARTYPPVATN). Gln35 is modified (pyrrolidone carboxylic acid). Residue Glu198 is part of the active site. Asn234 is a glycosylation site (N-linked (GlcNAc...) asparagine). 3 disulfides stabilise this stretch: Cys281–Cys303, Cys320–Cys339, and Cys363–Cys380. The Ricin B-type lectin 1 domain occupies 307–434 (YEPTVRIGGR…YLMRQGWRTG (128 aa)). A 1-alpha repeat occupies 317–359 (DGMCVDVYDDGYHNGNRIIAWKCKDRLEENQLWTLKSDKTIRS). The 1-beta repeat unit spans residues 360 to 400 (NGKCLTTEGYAPGNYVMIYDCTSAVAEATYWEIWDNGTIIN). Residues Asn395 and Asn435 are each glycosylated (N-linked (GlcNAc...) asparagine). The 1-gamma repeat unit spans residues 403-435 (SALVLSAESSSMGGTLTVQTNEYLMRQGWRTGN). Residues 437-561 (TSPFVTSISG…GKPNQIWLTL (125 aa)) form the Ricin B-type lectin 2 domain. The stretch at 448–483 (SDLCMQAQGSNVWLADCDNNKKEQQWALYTDGSIRS) is one 2-alpha repeat. 2 disulfide bridges follow: Cys451/Cys464 and Cys490/Cys507. Residues 487-526 (TNNCLTSKDHKQGSPIVLMACSNGWASQRWLFKNDGSIYN) form a 2-beta repeat. The 2-gamma repeat unit spans residues 529-562 (DDMVMDVKRSDPSLKEIILHPYHGKPNQIWLTLF).

In the N-terminal section; belongs to the ribosome-inactivating protein family. Type 2 RIP subfamily. As to quaternary structure, disulfide-linked dimer of A and B chains.

It catalyses the reaction Endohydrolysis of the N-glycosidic bond at one specific adenosine on the 28S rRNA.. In terms of biological role, the A chain is responsible for inhibiting protein synthesis through the catalytic inactivation of 60S ribosomal subunits by removing adenine from position 4,324 of 28S rRNA. Abrin-a is more toxic than ricin. Functionally, the B chain is a galactose-specific lectin that facilitates the binding of abrin to the cell membrane that precedes endocytosis. The protein is Abrin-c of Abrus precatorius (Indian licorice).